A 211-amino-acid polypeptide reads, in one-letter code: Methylthioribulose-1-phosphate dehydratase (211 aa).

The Zn(2+) site is built by His-105 and His-107.

The protein belongs to the aldolase class II family. MtnB subfamily. Requires Zn(2+) as cofactor.

The catalysed reaction is 5-(methylsulfanyl)-D-ribulose 1-phosphate = 5-methylsulfanyl-2,3-dioxopentyl phosphate + H2O. It functions in the pathway amino-acid biosynthesis; L-methionine biosynthesis via salvage pathway; L-methionine from S-methyl-5-thio-alpha-D-ribose 1-phosphate: step 2/6. Its function is as follows. Catalyzes the dehydration of methylthioribulose-1-phosphate (MTRu-1-P) into 2,3-diketo-5-methylthiopentyl-1-phosphate (DK-MTP-1-P). This Acidiphilium cryptum (strain JF-5) protein is Methylthioribulose-1-phosphate dehydratase.